The primary structure comprises 364 residues: Phosphoserine aminotransferase (364 aa).

Arg42 lines the L-glutamate pocket. Residues 76–77, Trp100, Thr150, Asp169, and Gln192 contribute to the pyridoxal 5'-phosphate site; that span reads AS. Lys193 carries the post-translational modification N6-(pyridoxal phosphate)lysine. 234 to 235 serves as a coordination point for pyridoxal 5'-phosphate; sequence NT.

Belongs to the class-V pyridoxal-phosphate-dependent aminotransferase family. SerC subfamily. As to quaternary structure, homodimer. Requires pyridoxal 5'-phosphate as cofactor.

The protein resides in the cytoplasm. The enzyme catalyses O-phospho-L-serine + 2-oxoglutarate = 3-phosphooxypyruvate + L-glutamate. The catalysed reaction is 4-(phosphooxy)-L-threonine + 2-oxoglutarate = (R)-3-hydroxy-2-oxo-4-phosphooxybutanoate + L-glutamate. The protein operates within amino-acid biosynthesis; L-serine biosynthesis; L-serine from 3-phospho-D-glycerate: step 2/3. Catalyzes the reversible conversion of 3-phosphohydroxypyruvate to phosphoserine and of 3-hydroxy-2-oxo-4-phosphonooxybutanoate to phosphohydroxythreonine. The polypeptide is Phosphoserine aminotransferase (Shouchella clausii (strain KSM-K16) (Alkalihalobacillus clausii)).